Consider the following 142-residue polypeptide: Gene 46 protein (142 aa).

The disordered stretch occupies residues 82-101 (KALAQVKPETGPSRPNRKKL).

The protein is Gene 46 protein (46) of Mycobacterium (Mycobacteriophage L5).